A 129-amino-acid chain; its full sequence is Small ribosomal subunit protein eS6 (129 aa).

The interval 106–129 (QINASIVSRGEQSIDDLLGGEDDE) is disordered.

The protein belongs to the eukaryotic ribosomal protein eS6 family.

The sequence is that of Small ribosomal subunit protein eS6 from Natronomonas pharaonis (strain ATCC 35678 / DSM 2160 / CIP 103997 / JCM 8858 / NBRC 14720 / NCIMB 2260 / Gabara) (Halobacterium pharaonis).